The following is a 107-amino-acid chain: Phosphoribosyl-ATP pyrophosphatase (107 aa).

The protein belongs to the PRA-PH family.

The protein resides in the cytoplasm. The catalysed reaction is 1-(5-phospho-beta-D-ribosyl)-ATP + H2O = 1-(5-phospho-beta-D-ribosyl)-5'-AMP + diphosphate + H(+). It functions in the pathway amino-acid biosynthesis; L-histidine biosynthesis; L-histidine from 5-phospho-alpha-D-ribose 1-diphosphate: step 2/9. This is Phosphoribosyl-ATP pyrophosphatase from Brucella abortus (strain S19).